Consider the following 480-residue polypeptide: 6-phosphogluconate dehydrogenase, decarboxylating 1 (480 aa).

Residues 10-15, 33-35, 77-79, and N105 each bind NADP(+); these read GLAVMG, NRT, and VKA. Substrate contacts are provided by residues N105 and 131 to 133; that span reads SGG. K186 functions as the Proton acceptor in the catalytic mechanism. 189–190 contributes to the substrate binding site; the sequence is HN. E193 functions as the Proton donor in the catalytic mechanism. Substrate-binding residues include Y194, K264, R291, R450, and H456.

Belongs to the 6-phosphogluconate dehydrogenase family. In terms of assembly, homodimer. As to expression, highly expressed in inflorescence, lowly expressed in root and embryos and almost absent in leaves.

Its subcellular location is the cytoplasm. The enzyme catalyses 6-phospho-D-gluconate + NADP(+) = D-ribulose 5-phosphate + CO2 + NADPH. It participates in carbohydrate degradation; pentose phosphate pathway; D-ribulose 5-phosphate from D-glucose 6-phosphate (oxidative stage): step 3/3. Catalyzes the oxidative decarboxylation of 6-phosphogluconate to ribulose 5-phosphate and CO(2), with concomitant reduction of NADP to NADPH. This is 6-phosphogluconate dehydrogenase, decarboxylating 1 (G6PGH1) from Oryza sativa subsp. japonica (Rice).